Reading from the N-terminus, the 1950-residue chain is E3 ubiquitin-protein ligase UBR1 (1950 aa).

Residues H118, C123, C136, C139, C148, C151, H157, H160, H161, C175, C177, and C189 each coordinate Zn(2+). The UBR-type zinc-finger motif lies at R121–Q194. S296 and S300 each carry phosphoserine. The tract at residues H678 to H681 is ubiquitin-binding loop. D952 contacts Zn(2+). Positions K1165–E1200 are UBC2-binding region (U2BR). Residues C1220, C1223, C1295, H1297, H1300, C1303, C1320, and C1323 each contribute to the Zn(2+) site. An RING-type; atypical zinc finger spans residues C1220–Q1324. Positions L1333–I1665 are cap helical domain (CHD). Positions 1703, 1706, 1722, 1727, 1763, and 1775 each coordinate Zn(2+). 2 disordered regions span residues R1826 to G1846 and T1893 to W1950. Composition is skewed to acidic residues over residues T1833–G1846 and D1934–W1950. At S1938 the chain carries Phosphoserine.

Belongs to the E3 ubiquitin-protein ligase UBR1-like family. In terms of assembly, interacts with UBC2. Interacts with RPN2, RPT1 and RPT6 from the 26S proteasome.

The catalysed reaction is S-ubiquitinyl-[E2 ubiquitin-conjugating enzyme]-L-cysteine + [acceptor protein]-L-lysine = [E2 ubiquitin-conjugating enzyme]-L-cysteine + N(6)-ubiquitinyl-[acceptor protein]-L-lysine.. It functions in the pathway protein modification; protein ubiquitination. Its function is as follows. Ubiquitin ligase protein which is a component of the N-end rule pathway. Recognizes and binds to proteins bearing specific N-terminal residues that are destabilizing according to the N-end rule, leading to their ubiquitination and subsequent degradation. Recognizes both type-1 and type-2 N-degrons, containing positively charged amino acids (Arg, Lys and His) and bulky and hydrophobic amino acids, respectively. This Saccharomyces cerevisiae (strain ATCC 204508 / S288c) (Baker's yeast) protein is E3 ubiquitin-protein ligase UBR1.